We begin with the raw amino-acid sequence, 308 residues long: Methionyl-tRNA formyltransferase (308 aa).

(6S)-5,6,7,8-tetrahydrofolate is bound at residue 110–113; it reads SLLP.

It belongs to the Fmt family.

The enzyme catalyses L-methionyl-tRNA(fMet) + (6R)-10-formyltetrahydrofolate = N-formyl-L-methionyl-tRNA(fMet) + (6S)-5,6,7,8-tetrahydrofolate + H(+). Attaches a formyl group to the free amino group of methionyl-tRNA(fMet). The formyl group appears to play a dual role in the initiator identity of N-formylmethionyl-tRNA by promoting its recognition by IF2 and preventing the misappropriation of this tRNA by the elongation apparatus. The polypeptide is Methionyl-tRNA formyltransferase (Neisseria meningitidis serogroup A / serotype 4A (strain DSM 15465 / Z2491)).